A 142-amino-acid chain; its full sequence is ATP synthase epsilon chain (142 aa).

This sequence belongs to the ATPase epsilon chain family. F-type ATPases have 2 components, CF(1) - the catalytic core - and CF(0) - the membrane proton channel. CF(1) has five subunits: alpha(3), beta(3), gamma(1), delta(1), epsilon(1). CF(0) has three main subunits: a, b and c.

It localises to the cell inner membrane. In terms of biological role, produces ATP from ADP in the presence of a proton gradient across the membrane. This is ATP synthase epsilon chain from Pasteurella multocida (strain Pm70).